The following is a 66-amino-acid chain: Large ribosomal subunit protein bL35 (66 aa).

Belongs to the bacterial ribosomal protein bL35 family.

The protein is Large ribosomal subunit protein bL35 of Caulobacter sp. (strain K31).